The chain runs to 160 residues: Ribosomal RNA large subunit methyltransferase H (160 aa).

Residue Gly-108 coordinates S-adenosyl-L-methionine.

It belongs to the RNA methyltransferase RlmH family. As to quaternary structure, homodimer.

The protein localises to the cytoplasm. It carries out the reaction pseudouridine(1915) in 23S rRNA + S-adenosyl-L-methionine = N(3)-methylpseudouridine(1915) in 23S rRNA + S-adenosyl-L-homocysteine + H(+). Its function is as follows. Specifically methylates the pseudouridine at position 1915 (m3Psi1915) in 23S rRNA. This chain is Ribosomal RNA large subunit methyltransferase H, found in Rhodopseudomonas palustris (strain BisA53).